Reading from the N-terminus, the 441-residue chain is RNA-binding protein BRN1 (441 aa).

RRM domains lie at 18-99 and 106-186; these read VKLF…YADG and HKLF…WADT. Residues 258–273 show a composition bias toward polar residues; that stretch reads QPNQGNNNALQGTSPD. The disordered stretch occupies residues 258 to 282; sequence QPNQGNNNALQGTSPDSVPPRLARR. The region spanning 349-427 is the RRM 3 domain; it reads ANLFIYNIPR…KKLKVQLKRD (79 aa).

Highly expressed in stems and cauline leaves, and at lower levels in siliques, flowers, roots and rosette leaves.

The protein resides in the cytoplasm. RNA-binding protein involved in the regulation of flowering time. Acts as a repressor of the activity of SOC1, a transcriptional activator of flowering time. Binds to the 3'-UTR of SOC1 mRNA in the cytoplasm and participates in SOC1 mRNA decay, mediated by the distal region of the SOC1 3'-UTR. Acts as a positive regulator of salicylic acid (SA)-mediated immunity. May act on SA signaling-related genes at a post-transcriptional level. This is RNA-binding protein BRN1 from Arabidopsis thaliana (Mouse-ear cress).